A 336-amino-acid polypeptide reads, in one-letter code: Dihydroorotate dehydrogenase (quinone) (336 aa).

Residues 62–66 and threonine 86 contribute to the FMN site; that span reads AGLDK. Lysine 66 provides a ligand contact to substrate. A substrate-binding site is contributed by 111 to 115; it reads NRMGF. Positions 139 and 172 each coordinate FMN. Asparagine 172 provides a ligand contact to substrate. Serine 175 acts as the Nucleophile in catalysis. Asparagine 177 serves as a coordination point for substrate. The FMN site is built by lysine 217 and threonine 245. Substrate is bound at residue 246–247; the sequence is NT. Residues glycine 268, glycine 297, and 318–319 contribute to the FMN site; that span reads YS.

It belongs to the dihydroorotate dehydrogenase family. Type 2 subfamily. In terms of assembly, monomer. It depends on FMN as a cofactor.

It is found in the cell membrane. The enzyme catalyses (S)-dihydroorotate + a quinone = orotate + a quinol. It participates in pyrimidine metabolism; UMP biosynthesis via de novo pathway; orotate from (S)-dihydroorotate (quinone route): step 1/1. Its function is as follows. Catalyzes the conversion of dihydroorotate to orotate with quinone as electron acceptor. This chain is Dihydroorotate dehydrogenase (quinone), found in Aeromonas hydrophila subsp. hydrophila (strain ATCC 7966 / DSM 30187 / BCRC 13018 / CCUG 14551 / JCM 1027 / KCTC 2358 / NCIMB 9240 / NCTC 8049).